A 428-amino-acid chain; its full sequence is Enolase (428 aa).

Gln-163 serves as a coordination point for (2R)-2-phosphoglycerate. The active-site Proton donor is the Glu-205. Residues Asp-242, Glu-285, and Asp-312 each contribute to the Mg(2+) site. Lys-337, Arg-366, Ser-367, and Lys-388 together coordinate (2R)-2-phosphoglycerate. The active-site Proton acceptor is the Lys-337.

This sequence belongs to the enolase family. Mg(2+) serves as cofactor.

It is found in the cytoplasm. Its subcellular location is the secreted. The protein localises to the cell surface. The catalysed reaction is (2R)-2-phosphoglycerate = phosphoenolpyruvate + H2O. Its pathway is carbohydrate degradation; glycolysis; pyruvate from D-glyceraldehyde 3-phosphate: step 4/5. Catalyzes the reversible conversion of 2-phosphoglycerate (2-PG) into phosphoenolpyruvate (PEP). It is essential for the degradation of carbohydrates via glycolysis. This chain is Enolase, found in Neisseria meningitidis serogroup A / serotype 4A (strain DSM 15465 / Z2491).